The sequence spans 81 residues: Ferredoxin (81 aa).

Residues 2–30 form the 4Fe-4S ferredoxin-type domain; the sequence is KYTIVDKETCIACGACGAAAPDIYDYDED. [4Fe-4S] cluster contacts are provided by Cys11, Cys14, Cys17, and Cys61.

It depends on [4Fe-4S] cluster as a cofactor.

Its function is as follows. Ferredoxins are iron-sulfur proteins that transfer electrons in a wide variety of metabolic reactions. This chain is Ferredoxin (fer), found in Geobacillus stearothermophilus (Bacillus stearothermophilus).